Here is a 206-residue protein sequence, read N- to C-terminus: Small ribosomal subunit protein uS4 (206 aa).

An S4 RNA-binding domain is found at 96-156 (GRLDNVVYRM…EKSKNQLRIQ (61 aa)).

This sequence belongs to the universal ribosomal protein uS4 family. As to quaternary structure, part of the 30S ribosomal subunit. Contacts protein S5. The interaction surface between S4 and S5 is involved in control of translational fidelity.

In terms of biological role, one of the primary rRNA binding proteins, it binds directly to 16S rRNA where it nucleates assembly of the body of the 30S subunit. With S5 and S12 plays an important role in translational accuracy. The sequence is that of Small ribosomal subunit protein uS4 from Saccharophagus degradans (strain 2-40 / ATCC 43961 / DSM 17024).